Reading from the N-terminus, the 130-residue chain is DNA-directed RNA polymerase subunit omega (130 aa).

Positions 110 to 130 (EELLKGLEGLAPPEEQPEEDE) are disordered.

It belongs to the RNA polymerase subunit omega family. As to quaternary structure, the RNAP catalytic core consists of 2 alpha, 1 beta, 1 beta' and 1 omega subunit. When a sigma factor is associated with the core the holoenzyme is formed, which can initiate transcription.

It catalyses the reaction RNA(n) + a ribonucleoside 5'-triphosphate = RNA(n+1) + diphosphate. In terms of biological role, promotes RNA polymerase assembly. Latches the N- and C-terminal regions of the beta' subunit thereby facilitating its interaction with the beta and alpha subunits. This chain is DNA-directed RNA polymerase subunit omega, found in Bradyrhizobium sp. (strain BTAi1 / ATCC BAA-1182).